Reading from the N-terminus, the 536-residue chain is Putative cysteine ligase BshC (536 aa).

The protein belongs to the BshC family.

Functionally, involved in bacillithiol (BSH) biosynthesis. May catalyze the last step of the pathway, the addition of cysteine to glucosamine malate (GlcN-Mal) to generate BSH. This is Putative cysteine ligase BshC from Anoxybacillus flavithermus (strain DSM 21510 / WK1).